The sequence spans 629 residues: MAYHNPFIVNGKIRFPENTNLVRHVEKWARVRGDKLAYRFLDFSTERDGVERDILWSEFSARNRAVGARLQQVTQPGDRIAILCPQNLDYLISFFGALYSGRIAVPLFDPAEPGHVGRLHAVLDDCTPSTILTTTDSAEGVRKFIRSRSAKERPRVIAVDAVPTEVASTWQQPEANELTTAYLQYTSGSTRVPSGVQITHLNLPTNVLQVLNALEGQEGDRGVSWLPFFHDMGLITVLLASVLGHSFTFMTPAAFVRRPGRWIRELARKPGETGGTFSAAPNFAFEHAAMRGVPRDDEPPLDLSNVKGILNGSEPVSPASMRKFFKAFEPYGLRETAVKPSYGLAEATLFVSTTPMDEVPTVIHVDRDELNKQRFVEVAADAPNAVAQVSAGKVGVDEWAVIVDTETASELPDGQIGEIWLHGNNLGIGYWGKEEESAQTFRNILKSRVPESHAEGAPDDGLWVRTGDYGTYFKGHLYIAGRIKDLVIIDGRNHYPQDLEYTAQESTKALRVGYVAAFSVPANQLPQKVFDDPHAGLSFDPEDTSEQLVIVGERAAGTHKLEYQPIADDIRAAIAVGHGVTVRDVLLVSAGTIPRTSSGKIGRRACRTAYIDGSLRSGVSSPTVFATGS.

Residues 186-191 (TSGSTR), Ser341, Ala345, Asp468, and Arg482 contribute to the ATP site.

It belongs to the ATP-dependent AMP-binding enzyme family. In terms of assembly, monomer.

It carries out the reaction a long-chain fatty acid + holo-[ACP] + ATP = a long-chain fatty acyl-[ACP] + AMP + diphosphate. The catalysed reaction is dodecanoate + ATP + H(+) = dodecanoyl-AMP + diphosphate. The enzyme catalyses tetradecanoate + ATP + H(+) = tetradecanoyl-AMP + diphosphate. The protein operates within lipid metabolism; mycolic acid biosynthesis. The acyl-AMP ligase activity is inhibited by the alkylphosphate esters of AMP, adenosine 50-dodecylphosphate (AMPC12) and eicosyl-AMP (AMPC20). Its function is as follows. Involved in the biosynthesis of mycolic acids. Catalyzes the activation of long-chain fatty acids as acyl-adenylates (acyl-AMP), which are then transferred to the phosphopantetheine arm of the polyketide synthase Pks13 for further chain extension. Can use dodecanoate (C12) and tetradecanoate (C14). In Mycobacterium marinum (strain ATCC BAA-535 / M), this protein is Long-chain-fatty-acid--AMP ligase FadD32 (fadD32).